The chain runs to 135 residues: UPF0355 protein SE_2351 (135 aa).

Belongs to the UPF0355 family.

This Staphylococcus epidermidis (strain ATCC 12228 / FDA PCI 1200) protein is UPF0355 protein SE_2351.